The chain runs to 505 residues: ATP synthase subunit alpha (505 aa).

169-176 (GDRKTGKT) lines the ATP pocket.

This sequence belongs to the ATPase alpha/beta chains family. In terms of assembly, F-type ATPases have 2 components, CF(1) - the catalytic core - and CF(0) - the membrane proton channel. CF(1) has five subunits: alpha(3), beta(3), gamma(1), delta(1), epsilon(1). CF(0) has three main subunits: a(1), b(2) and c(9-12). The alpha and beta chains form an alternating ring which encloses part of the gamma chain. CF(1) is attached to CF(0) by a central stalk formed by the gamma and epsilon chains, while a peripheral stalk is formed by the delta and b chains.

It localises to the cell membrane. The enzyme catalyses ATP + H2O + 4 H(+)(in) = ADP + phosphate + 5 H(+)(out). Its function is as follows. Produces ATP from ADP in the presence of a proton gradient across the membrane. The alpha chain is a regulatory subunit. The polypeptide is ATP synthase subunit alpha (Leuconostoc mesenteroides subsp. mesenteroides (strain ATCC 8293 / DSM 20343 / BCRC 11652 / CCM 1803 / JCM 6124 / NCDO 523 / NBRC 100496 / NCIMB 8023 / NCTC 12954 / NRRL B-1118 / 37Y)).